The chain runs to 210 residues: Dephospho-CoA kinase (210 aa).

The DPCK domain maps to 4–202; sequence WVGLTGGIGS…AFYSGIFASK (199 aa). 12–17 contributes to the ATP binding site; it reads GSGKSA.

This sequence belongs to the CoaE family.

The protein localises to the cytoplasm. It carries out the reaction 3'-dephospho-CoA + ATP = ADP + CoA + H(+). It participates in cofactor biosynthesis; coenzyme A biosynthesis; CoA from (R)-pantothenate: step 5/5. Functionally, catalyzes the phosphorylation of the 3'-hydroxyl group of dephosphocoenzyme A to form coenzyme A. This chain is Dephospho-CoA kinase, found in Neisseria meningitidis serogroup B (strain ATCC BAA-335 / MC58).